A 388-amino-acid chain; its full sequence is Succinate--CoA ligase [ADP-forming] subunit beta (388 aa).

One can recognise an ATP-grasp domain in the interval 9–244 (KALFAEYGLP…PSQDDAREAH (236 aa)). Residues K46, 53–55 (GRG), E99, T102, and E107 contribute to the ATP site. The Mg(2+) site is built by N199 and D213. Substrate contacts are provided by residues N264 and 321 to 323 (GIV).

Belongs to the succinate/malate CoA ligase beta subunit family. In terms of assembly, heterotetramer of two alpha and two beta subunits. Mg(2+) serves as cofactor.

The enzyme catalyses succinate + ATP + CoA = succinyl-CoA + ADP + phosphate. It carries out the reaction GTP + succinate + CoA = succinyl-CoA + GDP + phosphate. Its pathway is carbohydrate metabolism; tricarboxylic acid cycle; succinate from succinyl-CoA (ligase route): step 1/1. Its function is as follows. Succinyl-CoA synthetase functions in the citric acid cycle (TCA), coupling the hydrolysis of succinyl-CoA to the synthesis of either ATP or GTP and thus represents the only step of substrate-level phosphorylation in the TCA. The beta subunit provides nucleotide specificity of the enzyme and binds the substrate succinate, while the binding sites for coenzyme A and phosphate are found in the alpha subunit. This is Succinate--CoA ligase [ADP-forming] subunit beta from Shewanella pealeana (strain ATCC 700345 / ANG-SQ1).